The chain runs to 430 residues: 3-phosphoshikimate 1-carboxyvinyltransferase (430 aa).

3 residues coordinate 3-phosphoshikimate: K21, S22, and R26. K21 serves as a coordination point for phosphoenolpyruvate. Residues G94 and R122 each contribute to the phosphoenolpyruvate site. S168, Q170, D315, and K342 together coordinate 3-phosphoshikimate. Q170 is a binding site for phosphoenolpyruvate. The Proton acceptor role is filled by D315. Residues R346 and R389 each coordinate phosphoenolpyruvate.

The protein belongs to the EPSP synthase family. As to quaternary structure, monomer.

It is found in the cytoplasm. The enzyme catalyses 3-phosphoshikimate + phosphoenolpyruvate = 5-O-(1-carboxyvinyl)-3-phosphoshikimate + phosphate. It functions in the pathway metabolic intermediate biosynthesis; chorismate biosynthesis; chorismate from D-erythrose 4-phosphate and phosphoenolpyruvate: step 6/7. Its function is as follows. Catalyzes the transfer of the enolpyruvyl moiety of phosphoenolpyruvate (PEP) to the 5-hydroxyl of shikimate-3-phosphate (S3P) to produce enolpyruvyl shikimate-3-phosphate and inorganic phosphate. In Salinibacter ruber (strain DSM 13855 / M31), this protein is 3-phosphoshikimate 1-carboxyvinyltransferase.